Consider the following 182-residue polypeptide: Large ribosomal subunit protein bL17m (182 aa).

Belongs to the bacterial ribosomal protein bL17 family.

Its subcellular location is the mitochondrion. The polypeptide is Large ribosomal subunit protein bL17m (mrpl17) (Dictyostelium discoideum (Social amoeba)).